The primary structure comprises 97 residues: DNA/RNA-binding protein Alba (97 aa).

Lys15 is modified (N6-acetyllysine).

It belongs to the histone-like Alba family. In terms of processing, acetylated. Acetylation at Lys-15 decreases DNA-binding affinity.

The protein resides in the cytoplasm. Its subcellular location is the chromosome. Functionally, binds double-stranded DNA tightly but without sequence specificity. Involved in DNA compaction. The protein is DNA/RNA-binding protein Alba of Ignicoccus hospitalis (strain KIN4/I / DSM 18386 / JCM 14125).